Reading from the N-terminus, the 115-residue chain is Large ribosomal subunit protein bL19 (115 aa).

It belongs to the bacterial ribosomal protein bL19 family.

Its function is as follows. This protein is located at the 30S-50S ribosomal subunit interface and may play a role in the structure and function of the aminoacyl-tRNA binding site. The sequence is that of Large ribosomal subunit protein bL19 from Shouchella clausii (strain KSM-K16) (Alkalihalobacillus clausii).